Reading from the N-terminus, the 427-residue chain is ATP-dependent RNA helicase DDX39A (427 aa).

Over residues 1–19 (MAEQDVENELLDYDEDEEP) the composition is skewed to acidic residues. The disordered stretch occupies residues 1–35 (MAEQDVENELLDYDEDEEPQVPQESTPAPPKKDVK). Alanine 2 carries the post-translational modification N-acetylalanine. Residue lysine 31 forms a Glycyl lysine isopeptide (Lys-Gly) (interchain with G-Cter in SUMO2) linkage. Position 35 is an N6-acetyllysine; alternate (lysine 35). A Glycyl lysine isopeptide (Lys-Gly) (interchain with G-Cter in SUMO2); alternate cross-link involves residue lysine 35. Serine 37 is subject to Phosphoserine. The Q motif signature appears at 44 to 72 (SGFRDFLLKPELLRAIVDCGFEHPSEVQH). The 174-residue stretch at 75 to 248 (IPQAILGMDV…RKFMQDPMEV (174 aa)) folds into the Helicase ATP-binding domain. An ATP-binding site is contributed by 88 to 95 (AKSGMGKT). Glycyl lysine isopeptide (Lys-Gly) (interchain with G-Cter in SUMO2) cross-links involve residues lysine 154 and lysine 162. Position 171 is a phosphothreonine (threonine 171). The DECD box signature appears at 195-198 (DECD). Glycyl lysine isopeptide (Lys-Gly) (interchain with G-Cter in SUMO2) cross-links involve residues lysine 240 and lysine 255. A Helicase C-terminal domain is found at 260–421 (GLQQYYVKLK…ELPEEIDIST (162 aa)). The residue at position 426 (serine 426) is a Phosphoserine.

It belongs to the DEAD box helicase family. DECD subfamily. Binds ALYREF/THOC4 and DDX39B/BAT1. Interacts with the apo-AREX complex component SARNP. Interacts with MX1. Interacts with MCM3AP isoform GANP. Interacts with ECD. Interacts with PHAX; this interaction stimulates PHAX RNA binding activity. SUMOylated by RANBP2; SUMOylation modification affects its ability to bind RNA.

Its subcellular location is the nucleus. It is found in the cytoplasm. It carries out the reaction ATP + H2O = ADP + phosphate + H(+). In terms of biological role, helicase that plays an essential role in mRNA export and is involved in multiple steps in RNA metabolism including alternative splicing. Regulates nuclear mRNA export to the cytoplasm through association with ECD. Also involved in spliceosomal uridine-rich small nuclear RNA (U snRNA) export by stimulating the RNA binding of adapter PHAX. Plays a role in the negative regulation of type I IFN production by increasing the nuclear retention of antiviral transcripts and thus reducing their protein expression. Independently of the interferon pathway, plays an antiviral role against alphaviruses by binding to a 5' conserved sequence element in the viral genomic RNA. The polypeptide is ATP-dependent RNA helicase DDX39A (Ddx39a) (Rattus norvegicus (Rat)).